Reading from the N-terminus, the 334-residue chain is Holliday junction branch migration complex subunit RuvB (334 aa).

Residues 4–184 form a large ATPase domain (RuvB-L) region; the sequence is ADRIISASPK…FGIVQRLEFY (181 aa). Residues isoleucine 23, arginine 24, glycine 65, lysine 68, threonine 69, threonine 70, 131-133, arginine 174, tyrosine 184, and arginine 221 contribute to the ATP site; that span reads EDY. Threonine 69 contacts Mg(2+). The tract at residues 185–255 is small ATPAse domain (RuvB-S); that stretch reads SVDDLTSIVK…IAKQALAMLD (71 aa). The head domain (RuvB-H) stretch occupies residues 258–334; that stretch reads SEGFDFMDIK…YAHLGIAKLD (77 aa). Arginine 294, arginine 313, and arginine 318 together coordinate DNA.

It belongs to the RuvB family. As to quaternary structure, homohexamer. Forms an RuvA(8)-RuvB(12)-Holliday junction (HJ) complex. HJ DNA is sandwiched between 2 RuvA tetramers; dsDNA enters through RuvA and exits via RuvB. An RuvB hexamer assembles on each DNA strand where it exits the tetramer. Each RuvB hexamer is contacted by two RuvA subunits (via domain III) on 2 adjacent RuvB subunits; this complex drives branch migration. In the full resolvosome a probable DNA-RuvA(4)-RuvB(12)-RuvC(2) complex forms which resolves the HJ.

The protein localises to the cytoplasm. It carries out the reaction ATP + H2O = ADP + phosphate + H(+). Functionally, the RuvA-RuvB-RuvC complex processes Holliday junction (HJ) DNA during genetic recombination and DNA repair, while the RuvA-RuvB complex plays an important role in the rescue of blocked DNA replication forks via replication fork reversal (RFR). RuvA specifically binds to HJ cruciform DNA, conferring on it an open structure. The RuvB hexamer acts as an ATP-dependent pump, pulling dsDNA into and through the RuvAB complex. RuvB forms 2 homohexamers on either side of HJ DNA bound by 1 or 2 RuvA tetramers; 4 subunits per hexamer contact DNA at a time. Coordinated motions by a converter formed by DNA-disengaged RuvB subunits stimulates ATP hydrolysis and nucleotide exchange. Immobilization of the converter enables RuvB to convert the ATP-contained energy into a lever motion, pulling 2 nucleotides of DNA out of the RuvA tetramer per ATP hydrolyzed, thus driving DNA branch migration. The RuvB motors rotate together with the DNA substrate, which together with the progressing nucleotide cycle form the mechanistic basis for DNA recombination by continuous HJ branch migration. Branch migration allows RuvC to scan DNA until it finds its consensus sequence, where it cleaves and resolves cruciform DNA. This is Holliday junction branch migration complex subunit RuvB from Actinobacillus pleuropneumoniae serotype 5b (strain L20).